A 162-amino-acid chain; its full sequence is Dihydrofolate reductase type 3 (162 aa).

The DHFR domain maps to 2-160 (LISLIAALAH…YACEFVTLSR (159 aa)).

Belongs to the dihydrofolate reductase family. Monomer.

It carries out the reaction (6S)-5,6,7,8-tetrahydrofolate + NADP(+) = 7,8-dihydrofolate + NADPH + H(+). Its pathway is cofactor biosynthesis; tetrahydrofolate biosynthesis; 5,6,7,8-tetrahydrofolate from 7,8-dihydrofolate: step 1/1. Key enzyme in folate metabolism. Catalyzes an essential reaction for de novo glycine and purine synthesis, and for DNA precursor synthesis. The protein is Dihydrofolate reductase type 3 (dhfrIII) of Salmonella typhimurium.